A 93-amino-acid chain; its full sequence is DNA-directed RNA polymerase subunit omega (93 aa).

The protein belongs to the RNA polymerase subunit omega family. As to quaternary structure, the RNAP catalytic core consists of 2 alpha, 1 beta, 1 beta' and 1 omega subunit. When a sigma factor is associated with the core the holoenzyme is formed, which can initiate transcription.

The catalysed reaction is RNA(n) + a ribonucleoside 5'-triphosphate = RNA(n+1) + diphosphate. Promotes RNA polymerase assembly. Latches the N- and C-terminal regions of the beta' subunit thereby facilitating its interaction with the beta and alpha subunits. This is DNA-directed RNA polymerase subunit omega from Shewanella piezotolerans (strain WP3 / JCM 13877).